The sequence spans 693 residues: MAKEFLIELGTEELPPTQLRTLAEAFAANFEAELKGAELAHEGVKWFAAPRRLALKVAALADSQSDKVVEKRGPAVSAAFDAEGNPTKAAQGWARGCGITVDQAERMVTDKGEWLLFKQEVKGQPTSQIVVELAAKALANLPIAKPMRWGNKTTQFIRPVKTLTMLMGSDLIEGEILGVASDRTIRGHRFMGEQEFTIDSAEQYPAILEERGKVMADYEARKAIILADAQKAAAAVGGIADLEDDLVEEVTSLVEWPVVLTAKFEEEFLKVPSEALVYTMKGDQKYFPVYSHENGDENKKLLPNFIFVSNIESKEPRYVIEGNEKVVRPRLADAEFFFNTDRKRPLIDRLPELEQAIFQKQLGTIKDKTDRITELAGYIAEQIGADVEKSKRAGLLAKCDLMTSMVFEFTDTQGVMGMHYARHDGEAEEVAVALNEQYMPRFAGDELPSNGVSTAVAMADKLDTIVGIFGIGQAPKGSDPFALRRASLGVLRIIVEYGYNLDLVDLVAKAKSLFGDRLTNDNVEQDVIEFMLGRFRAWYQDEGFSVDIIQAVLARRPTKPADFDQRVKAVSHFRELEAAESLAAANKRVGNILAKFDGELAADIDLALLQEDAEKALAESVEVMTEALEPAFATGNYQEALSKLADLREPVDAFFDNVMVMADDEALKKNRLTLLNNLRNLFLQIADISLLQK.

Belongs to the class-II aminoacyl-tRNA synthetase family. In terms of assembly, tetramer of two alpha and two beta subunits.

It localises to the cytoplasm. The enzyme catalyses tRNA(Gly) + glycine + ATP = glycyl-tRNA(Gly) + AMP + diphosphate. The chain is Glycine--tRNA ligase beta subunit from Vibrio campbellii (strain ATCC BAA-1116).